The primary structure comprises 177 residues: Putative thioredoxin peroxidase (177 aa).

The Thioredoxin domain maps to 1–158 (MFPKTLTDSK…IIRLIDAITF (158 aa)). C45 functions as the Cysteine sulfenic acid (-SOH) intermediate in the catalytic mechanism.

This sequence belongs to the peroxiredoxin family. AhpC/Prx1 subfamily. In terms of assembly, homodimer; disulfide-linked, upon oxidation.

The catalysed reaction is a hydroperoxide + [thioredoxin]-dithiol = an alcohol + [thioredoxin]-disulfide + H2O. Thiol-specific peroxidase that catalyzes the reduction of hydrogen peroxide and organic hydroperoxides to water and alcohols, respectively. Plays a role in cell protection against oxidative stress by detoxifying peroxides and as sensor of hydrogen peroxide-mediated signaling events. The protein is Putative thioredoxin peroxidase of Encephalitozoon cuniculi (strain GB-M1) (Microsporidian parasite).